Here is a 299-residue protein sequence, read N- to C-terminus: GTPase Era (299 aa).

The Era-type G domain maps to 5-172; sequence KSGFVSIIGR…IDVLKTYLPE (168 aa). Positions 13–20 are G1; that stretch reads GRPNVGKS. Residue 13 to 20 participates in GTP binding; the sequence is GRPNVGKS. Positions 39 to 43 are G2; sequence QTTRN. Residues 60-63 are G3; the sequence is DTPG. GTP contacts are provided by residues 60-64 and 122-125; these read DTPGI and NKID. The interval 122–125 is G4; sequence NKID. A G5 region spans residues 151 to 153; it reads ISA. Positions 203-280 constitute a KH type-2 domain; it reads TSEEIPHAIG…YLELWVKVQR (78 aa).

The protein belongs to the TRAFAC class TrmE-Era-EngA-EngB-Septin-like GTPase superfamily. Era GTPase family. As to quaternary structure, monomer.

Its subcellular location is the cytoplasm. The protein resides in the cell membrane. An essential GTPase that binds both GDP and GTP, with rapid nucleotide exchange. Plays a role in 16S rRNA processing and 30S ribosomal subunit biogenesis and possibly also in cell cycle regulation and energy metabolism. The polypeptide is GTPase Era (Staphylococcus aureus (strain bovine RF122 / ET3-1)).